Here is a 583-residue protein sequence, read N- to C-terminus: Torsin-1A-interacting protein 1 (583 aa).

Residues 1–339 lie on the Nuclear side of the membrane; that stretch reads MAGERWRAEG…DESSVKIKWW (339 aa). The segment at 23–208 is disordered; that stretch reads APIREGRRRL…PPLRSPRPDA (186 aa). Ser60 carries the phosphoserine modification. Basic and acidic residues-rich tracts occupy residues 70–101 and 115–132; these read FEPRAAKERSPGERRTPPEKFRSDSAKEEVRE and GPQEAEEMKTRRSTRLEQ. 4 positions are modified to phosphoserine: Ser134, Ser142, Ser155, and Ser157. Over residues 166 to 188 the composition is skewed to polar residues; the sequence is SSQPVTSQTVSKKTVRTPETSVM. Ser189 bears the Phosphoserine mark. The residue at position 222 (Thr222) is a Phosphothreonine. 3 positions are modified to phosphoserine: Ser228, Ser231, and Ser242. A Glycyl lysine isopeptide (Lys-Gly) (interchain with G-Cter in SUMO2) cross-link involves residue Lys309. The residue at position 316 (Ser316) is a Phosphoserine. Residues 340 to 360 traverse the membrane as a helical segment; the sequence is LLILVAALAMGIYWFFHTPVV. The interval 356–583 is interaction with TOR1A; sequence HTPVVETTAV…ENALKAGSCL (228 aa). Positions 360–388 form a coiled coil; that stretch reads VETTAVQEFQNQMKQLQSKYQSQDEKLWK. The Perinuclear space segment spans residues 361 to 583; that stretch reads ETTAVQEFQN…ENALKAGSCL (223 aa). N-linked (GlcNAc...) asparagine glycosylation occurs at Asn399.

It belongs to the TOR1AIP family. In terms of assembly, interacts with ATP1B4. Interacts with TOR1A (ATP-bound). Interacts with TOR1B, TOR2A and TOR3A. Interacts with VIM.

Its subcellular location is the nucleus inner membrane. Functionally, required for nuclear membrane integrity. Induces TOR1A and TOR1B ATPase activity and is required for their location on the nuclear membrane. Binds to A- and B-type lamins. Possible role in membrane attachment and assembly of the nuclear lamina. The protein is Torsin-1A-interacting protein 1 (Tor1aip1) of Rattus norvegicus (Rat).